A 114-amino-acid chain; its full sequence is U17-barytoxin-Tl1d (114 aa).

Positions 1–20 (MKTIIVFLSLLVLATKFGDA) are cleaved as a signal peptide. The propeptide occupies 21 to 74 (NEGVNQEQMKEVIQNEFREDFLNEMAPMSLLQQLEAIESTLLEKEADRNSRQKR). Cystine bridges form between C75–C88, C82–C93, and C87–C108.

It belongs to the neurotoxin 14 (magi-1) family. 03 (ICK-30-40) subfamily. Expressed by the venom gland.

The protein resides in the secreted. Functionally, ion channel inhibitor. In Trittame loki (Brush-footed trapdoor spider), this protein is U17-barytoxin-Tl1d.